The sequence spans 689 residues: Protein CFAP20DC (689 aa).

Disordered regions lie at residues 143–179 (GPPP…TVEK), 217–236 (LPIM…NNNR), 241–262 (LKST…NNTN), 333–424 (SKES…PSEL), and 583–660 (SIST…LSVE). A compositionally biased stretch (polar residues) spans 150–176 (RRSNMRISSETVRSVGSKNNRSCQPST). Positions 343–359 (EESQSVPKDIFTFSSRP) are enriched in polar residues. A compositionally biased stretch (acidic residues) spans 394–405 (SEDDFYGGDSSE). Positions 411–421 (IQGSRGPTTGP) are enriched in polar residues. The span at 583-593 (SISTSSDDTTT) shows a compositional bias: low complexity.

This chain is Protein CFAP20DC (CFAP20DC), found in Macaca fascicularis (Crab-eating macaque).